A 546-amino-acid polypeptide reads, in one-letter code: Probable lysosomal cobalamin transporter (546 aa).

4 consecutive transmembrane segments (helical) span residues 8-28 (LAQG…FSWF), 48-68 (IIAL…IFLV), 102-122 (ILYA…YFFF), and 141-161 (YSIG…FAPL). A glycan (N-linked (GlcNAc...) asparagine) is linked at Asn167. A run of 4 helical transmembrane segments spans residues 189–209 (TALS…MITY), 304–324 (MVFG…LFIT), 352–372 (IIMV…LLVV), and 407–427 (ALLF…VMLF). Residues Asn444, Asn452, and Asn459 are each glycosylated (N-linked (GlcNAc...) asparagine). A helical transmembrane segment spans residues 495 to 515 (VWFFGACYYWGTWLFLVVFMT).

It belongs to the LIMR family. LMBRD1 subfamily.

The protein localises to the lysosome membrane. Functionally, probable lysosomal cobalamin transporter. Required to export cobalamin from lysosomes allowing its conversion to cofactors. The chain is Probable lysosomal cobalamin transporter from Nematostella vectensis (Starlet sea anemone).